We begin with the raw amino-acid sequence, 213 residues long: Glutathione S-transferase APIC (213 aa).

The 82-residue stretch at 1–82 (MAIKVHGSPM…YIAHVYADNG (82 aa)) folds into the GST N-terminal domain. Residues Ser11, 12 to 13 (TA), 40 to 41 (HK), 53 to 54 (QV), and 66 to 67 (ES) each bind glutathione. The region spanning 89 to 213 (DPKKMPIMSV…WVKGLEKLQK (125 aa)) is the GST C-terminal domain.

The protein belongs to the GST superfamily. Phi family.

It catalyses the reaction RX + glutathione = an S-substituted glutathione + a halide anion + H(+). Functionally, conjugation of reduced glutathione to a wide number of exogenous and endogenous hydrophobic electrophiles. The protein is Glutathione S-transferase APIC of Nicotiana tabacum (Common tobacco).